The sequence spans 587 residues: 5-aminolevulinate synthase, erythroid-specific, mitochondrial (587 aa).

Residues M1–S49 constitute a mitochondrion transit peptide. Residue R163 participates in succinyl-CoA binding. Positions 258 and 259 each coordinate pyridoxal 5'-phosphate. Succinyl-CoA contacts are provided by S280 and K299. Pyridoxal 5'-phosphate is bound by residues S332, H360, and T388. Residue K391 is part of the active site. At K391 the chain carries N6-(pyridoxal phosphate)lysine. The pyridoxal 5'-phosphate site is built by T420 and T421. T508 contributes to the succinyl-CoA binding site.

The protein belongs to the class-II pyridoxal-phosphate-dependent aminotransferase family. As to quaternary structure, homodimer. Interacts with SUCLA2. The cofactor is pyridoxal 5'-phosphate. In terms of tissue distribution, predomnantly expressed in erythroid cells.

It localises to the mitochondrion inner membrane. The protein resides in the mitochondrion. It catalyses the reaction succinyl-CoA + glycine + H(+) = 5-aminolevulinate + CO2 + CoA. The protein operates within porphyrin-containing compound metabolism; protoporphyrin-IX biosynthesis; 5-aminolevulinate from glycine: step 1/1. Catalyzes the pyridoxal 5'-phosphate (PLP)-dependent condensation of succinyl-CoA and glycine to form aminolevulinic acid (ALA), with CoA and CO2 as by-products. Contributes significantly to heme formation during erythropoiesis. In Mus musculus (Mouse), this protein is 5-aminolevulinate synthase, erythroid-specific, mitochondrial (Alas2).